Reading from the N-terminus, the 325-residue chain is Homocysteine S-methyltransferase 2 (325 aa).

Positions 6–321 (LKQFLADNPK…KDIQEISAAV (316 aa)) constitute a Hcy-binding domain. T138 carries the phosphothreonine modification. 3 residues coordinate Zn(2+): C239, C306, and C307.

The cofactor is Zn(2+).

Its subcellular location is the cytoplasm. It is found in the nucleus. The enzyme catalyses S-methyl-L-methionine + L-homocysteine = 2 L-methionine + H(+). In terms of biological role, homocysteine S-methyltransferase involved in the conversion of S-adenosylmethionine (AdoMet) to methionine to control the methionine/AdoMet ratio. Also converts S-methylmethionine (SMM) to methionine. The sequence is that of Homocysteine S-methyltransferase 2 (SAM4) from Saccharomyces cerevisiae (strain ATCC 204508 / S288c) (Baker's yeast).